Consider the following 213-residue polypeptide: Octanoyltransferase (213 aa).

One can recognise a BPL/LPL catalytic domain in the interval 32-207 (ESTLDEIWLV…NILALLNNPD (176 aa)). Substrate is bound by residues 71 to 78 (RGGQVTYH), 138 to 140 (SLG), and 151 to 153 (GLA). Catalysis depends on C169, which acts as the Acyl-thioester intermediate.

This sequence belongs to the LipB family.

The protein localises to the cytoplasm. The enzyme catalyses octanoyl-[ACP] + L-lysyl-[protein] = N(6)-octanoyl-L-lysyl-[protein] + holo-[ACP] + H(+). Its pathway is protein modification; protein lipoylation via endogenous pathway; protein N(6)-(lipoyl)lysine from octanoyl-[acyl-carrier-protein]: step 1/2. Its function is as follows. Catalyzes the transfer of endogenously produced octanoic acid from octanoyl-acyl-carrier-protein onto the lipoyl domains of lipoate-dependent enzymes. Lipoyl-ACP can also act as a substrate although octanoyl-ACP is likely to be the physiological substrate. The sequence is that of Octanoyltransferase from Escherichia coli (strain SMS-3-5 / SECEC).